The sequence spans 241 residues: Phosphoribosylformylglycinamidine synthase subunit PurQ (241 aa).

A Glutamine amidotransferase type-1 domain is found at 6 to 241; sequence NVGIVVFPGS…QSLLLASAFA (236 aa). Cys-90 functions as the Nucleophile in the catalytic mechanism. Residues His-207 and Glu-209 contribute to the active site.

Part of the FGAM synthase complex composed of 1 PurL, 1 PurQ and 2 PurS subunits.

It is found in the cytoplasm. It carries out the reaction N(2)-formyl-N(1)-(5-phospho-beta-D-ribosyl)glycinamide + L-glutamine + ATP + H2O = 2-formamido-N(1)-(5-O-phospho-beta-D-ribosyl)acetamidine + L-glutamate + ADP + phosphate + H(+). It catalyses the reaction L-glutamine + H2O = L-glutamate + NH4(+). It participates in purine metabolism; IMP biosynthesis via de novo pathway; 5-amino-1-(5-phospho-D-ribosyl)imidazole from N(2)-formyl-N(1)-(5-phospho-D-ribosyl)glycinamide: step 1/2. Its function is as follows. Part of the phosphoribosylformylglycinamidine synthase complex involved in the purines biosynthetic pathway. Catalyzes the ATP-dependent conversion of formylglycinamide ribonucleotide (FGAR) and glutamine to yield formylglycinamidine ribonucleotide (FGAM) and glutamate. The FGAM synthase complex is composed of three subunits. PurQ produces an ammonia molecule by converting glutamine to glutamate. PurL transfers the ammonia molecule to FGAR to form FGAM in an ATP-dependent manner. PurS interacts with PurQ and PurL and is thought to assist in the transfer of the ammonia molecule from PurQ to PurL. This chain is Phosphoribosylformylglycinamidine synthase subunit PurQ, found in Thermosynechococcus vestitus (strain NIES-2133 / IAM M-273 / BP-1).